Reading from the N-terminus, the 354-residue chain is MLKNDRLLRALRRQPVDRTPVWLMRQAGRYLPEYRATRARAGSFLGMAKNPDIACEVTLQPLERFPLDAAILFSDILTIPDAMGLELYFVEGEGPKFRHPVRDADAIHRLGVPDMETELRYVMDAVRLIRRELDGAVPLIGFSGSPWTLACYMIEGGGSKEYARIKAMAFNAPQLLHHLLSTVTDAVIAYLSAQRAAGAQALQVFDTWGGVLSPAMYREFSLPYLTRIAQELERGSGEERTPLVLFGKGNGAYVSELAASGAEAVGVDWTISLADAAERAGGRVALQGNLDPATLYGSPDAIRSEVGKTLDSYAYGNGGSREGHVFNLGHGMSPDMNPDHVGVLVEAVQTLSKR.

Residues 25–29, D75, Y152, T207, and H330 contribute to the substrate site; that span reads RQAGR.

It belongs to the uroporphyrinogen decarboxylase family. Homodimer.

Its subcellular location is the cytoplasm. The enzyme catalyses uroporphyrinogen III + 4 H(+) = coproporphyrinogen III + 4 CO2. The protein operates within porphyrin-containing compound metabolism; protoporphyrin-IX biosynthesis; coproporphyrinogen-III from 5-aminolevulinate: step 4/4. Its function is as follows. Catalyzes the decarboxylation of four acetate groups of uroporphyrinogen-III to yield coproporphyrinogen-III. The sequence is that of Uroporphyrinogen decarboxylase from Xanthomonas campestris pv. campestris (strain 8004).